A 245-amino-acid polypeptide reads, in one-letter code: Derlin-1 (245 aa).

Residues 1–17 (MDAGVWYRSLPRFTRYW) are Cytoplasmic-facing. The helical transmembrane segment at 18–38 (LTATVVLSMLCRFDVIPLHWL) threads the bilayer. Over 39–58 (HLDRSAVFSKLQLWRCMTSL) the chain is Lumenal. The chain crosses the membrane as a helical span at residues 59 to 79 (FVFPISSNTAFHFLINCFFIV). At 80 to 99 (QYSSKLEKDQYSRSPADYLY) the chain is on the cytoplasmic side. The chain crosses the membrane as a helical span at residues 100–120 (LLIVSAVLANIGGMIFNVYFL). Over 121 to 156 (MDTLVLAITYIWCQLNKDVTVSFWFGTRFKAMYLPW) the chain is Lumenal. The chain crosses the membrane as a helical span at residues 157 to 177 (VLAAFEFIFHFSLASLVGIFV). Topologically, residues 178 to 245 (GHVYYFFKFQ…WGRGMTLGRN (68 aa)) are cytoplasmic. The segment at 218-245 (FGLPPESRAPPRQATESPWGRGMTLGRN) is disordered.

Belongs to the derlin family.

The protein resides in the endoplasmic reticulum membrane. May be involved in the degradation process of specific misfolded endoplasmic reticulum (ER) luminal proteins. May also involved in endoplasmic reticulum stress-induced pre-emptive quality control, a mechanism that selectively attenuates the translocation of newly synthesized proteins into the endoplasmic reticulum and reroutes them to the cytosol for proteasomal degradation. In Drosophila melanogaster (Fruit fly), this protein is Derlin-1.